The sequence spans 123 residues: Zinc metalloproteinase-disintegrin-like jerdohagin (123 aa).

The Peptidase M12B domain occupies 6 to 52; the sequence is RYLYIRHDREACTCHANSCIMSAYFSNSHVQYENYINDCKPQCILNE. Residue His12 participates in Zn(2+) binding. Cys19 and Cys24 are disulfide-bonded. The Ca(2+) site is built by Cys48 and Asn51. In terms of domain architecture, Disintegrin spans 53-80; the sequence is LHSWVECESGECCEQCRSECDIAESCTN. 4 disulfide bridges follow: Cys59-Cys65, Cys64-Cys78, Cys72-Cys90, and Cys106-Cys116. The D/ECD-tripeptide signature appears at 71–73; sequence ECD.

Belongs to the venom metalloproteinase (M12B) family. P-III subfamily. P-IIIa sub-subfamily. In terms of assembly, monomer. Zn(2+) serves as cofactor. Post-translationally, the N-terminus is blocked. In terms of tissue distribution, expressed by the venom gland.

It is found in the secreted. Its activity is regulated as follows. Its proteolytic and hemorrhagic activities are inhibited by EDTA, but not by PMSF. Functionally, snake venom metalloproteinase that has high hemorrhagic activity and degrades the alpha-chain of fibrinogen (FGA), leaving the beta- and the gamma-chain intact. It may also inhibit platelet aggregation. Cleaves insulin B chain at '25-Phe-|-Val-26', '26-Val-|-Asn-27', '29-His-|-Leu-30', '30-Leu-|-Cys-31', '33-Ser-|-His-34', '35-Leu-|-Val-36', '40-Tyr-|-Leu-41', '41-Leu-|-Val-42', '42-Val-|-Cys-43', '43-Cys-|-Gly-44', '44-Gly-|-Glu-45', '46-Arg-|-Gly-47', '47-Gly-|-Phe-48', '49-Phe-|-Tyr-50' and '52-Pro-|-Lys-53' bonds. Also cleaves human prothrombin (72 kDa) and activation fragment F1 (27 kDa) of activated human prothrombin, to generate two new proteins of 68 and 23 kDa. The polypeptide is Zinc metalloproteinase-disintegrin-like jerdohagin (Protobothrops jerdonii (Jerdon's pitviper)).